Consider the following 554-residue polypeptide: Folate synthesis bifunctional protein, mitochondrial (554 aa).

The transit peptide at 1-42 directs the protein to the mitochondrion; the sequence is MAPLLSQTLIHTGRFLLRRFLEPPPAVISAVAASRVCFHRYY. Residues 90–215 are HPPK; sequence VIALGSNIGN…SFVLAPLVDL (126 aa). In terms of domain architecture, Pterin-binding spans 273-541; sequence THVMGILNLT…NVRHNADAAK (269 aa). Residues 275-554 are DHPS; it reads VMGILNLTPD…AMLRRRRSKG (280 aa). Asn-280 is a Mg(2+) binding site. Residues Thr-320, Asp-357, Asn-376, Asp-449, Lys-494, and 529–531 contribute to the (7,8-dihydropterin-6-yl)methyl diphosphate site; that span reads RVH.

It in the N-terminal section; belongs to the HPPK family. The protein in the C-terminal section; belongs to the DHPS family. The cofactor is Mg(2+). In terms of tissue distribution, ubiquitous.

Its subcellular location is the mitochondrion. It catalyses the reaction 6-hydroxymethyl-7,8-dihydropterin + ATP = (7,8-dihydropterin-6-yl)methyl diphosphate + AMP + H(+). It carries out the reaction (7,8-dihydropterin-6-yl)methyl diphosphate + 4-aminobenzoate = 7,8-dihydropteroate + diphosphate. The protein operates within cofactor biosynthesis; tetrahydrofolate biosynthesis; 2-amino-4-hydroxy-6-hydroxymethyl-7,8-dihydropteridine diphosphate from 7,8-dihydroneopterin triphosphate: step 4/4. It participates in cofactor biosynthesis; tetrahydrofolate biosynthesis; 7,8-dihydrofolate from 2-amino-4-hydroxy-6-hydroxymethyl-7,8-dihydropteridine diphosphate and 4-aminobenzoate: step 1/2. Catalyzes the first two consecutive steps of tetrahydrofolate biosynthesis. This is Folate synthesis bifunctional protein, mitochondrial from Arabidopsis thaliana (Mouse-ear cress).